A 1353-amino-acid chain; its full sequence is Ankyrin repeat domain-containing protein 36B (1353 aa).

6 ANK repeats span residues 19–48 (YHLK…DANK), 52–81 (KERT…ELNL), 85–114 (EDRT…DPNI), 118–147 (FGRT…NIEE), 151–180 (NEYQ…NVNA), and 184–213 (LGRS…DVFS). Disordered stretches follow at residues 249–307 (PINS…KDSV) and 349–607 (MGGG…KATS). Polar residues predominate over residues 250–259 (INSNPVSPQK). Basic and acidic residues-rich tracts occupy residues 260 to 272 (QRAE…DKDS) and 295 to 306 (PAEKATSDEKDS). Composition is skewed to polar residues over residues 355 to 367 (GTVS…ASKT) and 389 to 400 (GTVSSQKQQALK). Composition is skewed to basic and acidic residues over residues 436–455 (TSDE…DGEI) and 471–491 (SVKE…EKSR). The span at 579-600 (VSNIPTEIKDGQQSGTVSSQKQ) shows a compositional bias: polar residues. Coiled coils occupy residues 731 to 762 (AEQD…QIHS), 821 to 908 (IKLK…YRIE), 937 to 1055 (SETD…DHDQ), and 1119 to 1344 (VFEH…LQHS).

It belongs to the ANKRD36 family.

The protein is Ankyrin repeat domain-containing protein 36B (ANKRD36B) of Homo sapiens (Human).